The chain runs to 339 residues: MRVYYDRDADVNLIKGKKVVVVGYGSQGHAHALNLRDSGVKDVAVALRAGSATAKKAEGEGLKVMTPADAAKWGDVVMILTPDELQADLYYNDLAANMKQGASLVFAHGLNIHFKLIEARADLDVFMVAPKGPGHTVRGEYVKGGGVPCLVAVAQNASGNALEIALSYASAIGGGRSGIIETSFREECETDLFGEQVVLCGGLTKLIQYGFETLVEAGYAPEMAYFECLHEVKLIVDLIYEGGIANMRYSISNTAEYGDYVTGPRIITDETKAEMKRVLEDIQAGRFVRDWMLECKAGQPSFKATRRIQAEHGIEVVGEKLRAMMPWIAKNKLVDKAKN.

A KARI N-terminal Rossmann domain is found at 1 to 182; sequence MRVYYDRDAD…GGGRSGIIET (182 aa). NADP(+) is bound by residues 24–27, R48, S51, T53, and 83–86; these read YGSQ and DELQ. H108 is a catalytic residue. An NADP(+)-binding site is contributed by G134. Positions 183–328 constitute a KARI C-terminal knotted domain; that stretch reads SFREECETDL…EKLRAMMPWI (146 aa). 4 residues coordinate Mg(2+): D191, E195, E227, and E231. Residue S252 coordinates substrate.

The protein belongs to the ketol-acid reductoisomerase family. The cofactor is Mg(2+).

The catalysed reaction is (2R)-2,3-dihydroxy-3-methylbutanoate + NADP(+) = (2S)-2-acetolactate + NADPH + H(+). The enzyme catalyses (2R,3R)-2,3-dihydroxy-3-methylpentanoate + NADP(+) = (S)-2-ethyl-2-hydroxy-3-oxobutanoate + NADPH + H(+). It functions in the pathway amino-acid biosynthesis; L-isoleucine biosynthesis; L-isoleucine from 2-oxobutanoate: step 2/4. The protein operates within amino-acid biosynthesis; L-valine biosynthesis; L-valine from pyruvate: step 2/4. Functionally, involved in the biosynthesis of branched-chain amino acids (BCAA). Catalyzes an alkyl-migration followed by a ketol-acid reduction of (S)-2-acetolactate (S2AL) to yield (R)-2,3-dihydroxy-isovalerate. In the isomerase reaction, S2AL is rearranged via a Mg-dependent methyl migration to produce 3-hydroxy-3-methyl-2-ketobutyrate (HMKB). In the reductase reaction, this 2-ketoacid undergoes a metal-dependent reduction by NADPH to yield (R)-2,3-dihydroxy-isovalerate. The chain is Ketol-acid reductoisomerase (NADP(+)) from Paramagnetospirillum magneticum (strain ATCC 700264 / AMB-1) (Magnetospirillum magneticum).